A 424-amino-acid polypeptide reads, in one-letter code: Tyrosine--tRNA ligase (424 aa).

An L-tyrosine-binding site is contributed by Tyr-37. Positions 42–51 (PTADSLHLGH) match the 'HIGH' region motif. Residues Tyr-175 and Gln-179 each coordinate L-tyrosine. Positions 235-239 (KFGKT) match the 'KMSKS' region motif. Lys-238 provides a ligand contact to ATP. Residues 357 to 414 (ADLQQALVNAELVPSRGQARTMIGSNAVAINGEKQADPEYVFTDADRLFGRYTLLRRG) form the S4 RNA-binding domain.

The protein belongs to the class-I aminoacyl-tRNA synthetase family. TyrS type 1 subfamily. In terms of assembly, homodimer.

It localises to the cytoplasm. The catalysed reaction is tRNA(Tyr) + L-tyrosine + ATP = L-tyrosyl-tRNA(Tyr) + AMP + diphosphate + H(+). Its function is as follows. Catalyzes the attachment of tyrosine to tRNA(Tyr) in a two-step reaction: tyrosine is first activated by ATP to form Tyr-AMP and then transferred to the acceptor end of tRNA(Tyr). The protein is Tyrosine--tRNA ligase of Yersinia pseudotuberculosis serotype O:1b (strain IP 31758).